The sequence spans 178 residues: CD209 antigen-like protein C (178 aa).

Cys-48 and Cys-59 are joined by a disulfide. The region spanning 54 to 169 (VFQGNCYFFS…CTIKKYWICK (116 aa)) is the C-type lectin domain. A glycan (N-linked (GlcNAc...) asparagine) is linked at Asn-70. 2 cysteine pairs are disulfide-bonded: Cys-76-Cys-168 and Cys-147-Cys-160. Ca(2+) contacts are provided by Glu-138, Asn-140, Glu-145, Asn-156, and Asp-157.

Probable pathogen-recognition receptor. May recognize in a calcium-dependent manner high mannose N-linked oligosaccharides in a variety of pathogen antigens. The protein is CD209 antigen-like protein C (Cd209c) of Mus musculus (Mouse).